A 349-amino-acid polypeptide reads, in one-letter code: Mannonate dehydratase (349 aa).

It belongs to the mannonate dehydratase family. Fe(2+) serves as cofactor. Requires Mn(2+) as cofactor.

The catalysed reaction is D-mannonate = 2-dehydro-3-deoxy-D-gluconate + H2O. It functions in the pathway carbohydrate metabolism; pentose and glucuronate interconversion. Catalyzes the dehydration of D-mannonate. The sequence is that of Mannonate dehydratase from Oceanobacillus iheyensis (strain DSM 14371 / CIP 107618 / JCM 11309 / KCTC 3954 / HTE831).